The sequence spans 185 residues: Casparian strip membrane protein 1 (185 aa).

Over 1-32 (MKAVSIEAGERSKAKRVHGVNRGISVFDLVLR) the chain is Cytoplasmic. The chain crosses the membrane as a helical span at residues 33–53 (IVALVGTLASAVAMGTAGQAL). Residues 54–73 (SFSTQIVNFEAQYDDIDAFK) lie on the Extracellular side of the membrane. The helical transmembrane segment at 74 to 94 (FFVVSNSITCVYLALSIPISI) threads the bilayer. The Cytoplasmic segment spans residues 95-106 (FHIIRSRAGKSR). A helical membrane pass occupies residues 107 to 127 (VLLIVLDAIMLVFLTSGASAA). Residues 128–160 (AAIVYLAHNGNTSTNWFSICQQYTDFCQRSAGS) are Extracellular-facing. N-linked (GlcNAc...) asparagine glycosylation is present at N138. Residues 161 to 181 (LIGSFGAMALMVLLIILSSIA) traverse the membrane as a helical segment. Over 182 to 185 (LSRR) the chain is Cytoplasmic.

It belongs to the Casparian strip membrane proteins (CASP) family. As to quaternary structure, homodimer and heterodimers.

The protein localises to the cell membrane. Functionally, regulates membrane-cell wall junctions and localized cell wall deposition. Required for establishment of the Casparian strip membrane domain (CSD) and the subsequent formation of Casparian strips, a cell wall modification of the root endodermis that determines an apoplastic barrier between the intraorganismal apoplasm and the extraorganismal apoplasm and prevents lateral diffusion. The polypeptide is Casparian strip membrane protein 1 (Solanum demissum (Wild potato)).